The chain runs to 281 residues: MYPPEFSYVRAESLQEALKFLEGNDNTRPLAGGQSLIPMLKLRVLSPDYILDINRLNELNYVKTSLNGVSIGALTRYHDILSNDIVKSKVPLMHHATRTIGDMQVRNMGTIGGAISNADPASDMPVVLTALNATIILSSASGSRSVKALDFFKGPFTTDTNKGELVTQIEVPVLDGYKTVYKKVVRRAGDYALASVALAIKLKGNEIEDIKLAYGGVHDKPFRAMEVEKNVIGKKLNDDLVKDIASKVSSQINPPSDHRGSSWYRREVVKVLTMKAFKEVA.

One can recognise an FAD-binding PCMH-type domain in the interval Met-1–Gly-176. FAD is bound by residues Ala-31–Ser-35 and Thr-110–Ala-114.

In terms of assembly, heterotrimer composed of a large chain (CutA), a medium chain (CutB) and a small chain (CutC). It depends on FAD as a cofactor.

It is found in the cytoplasm. The enzyme catalyses D-glyceraldehyde + A + H2O = (R)-glycerate + AH2 + H(+). Component of the glyceraldehyde dehydrogenase which is involved the nonphosphorylated Entner-Doudoroff pathway. Catalyzes the oxidation of D-glyceraldehyde to yield glycerate. When the artificial electron acceptor 2,6-dichlorophenol-indophenol (Cl2Ind) is used, the enzyme shows a broad substrate range (glyceraldehyde-3-phosphate, formaldehyde, acetaldehyde, propionaldehyde and isobutyraldehyde), but is most active with D-glyceraldehyde. It is not known which acceptor is utilized in vivo. This chain is Glyceraldehyde dehydrogenase medium chain (cutB), found in Sulfolobus acidocaldarius (strain ATCC 33909 / DSM 639 / JCM 8929 / NBRC 15157 / NCIMB 11770).